Reading from the N-terminus, the 1101-residue chain is Translation initiation factor IF-2 (1101 aa).

2 disordered regions span residues 81–437 and 452–509; these read QEIL…EDDF and SIST…QRAE. Over residues 93 to 108 the composition is skewed to polar residues; the sequence is PFSSTDAPVGSGQSSP. Positions 110–124 are enriched in pro residues; it reads IEPPRPPMKPQPPSP. Composition is skewed to polar residues over residues 128-149 and 157-184; these read EVTS…GSSS and SPMS…QLKY. The span at 185 to 196 shows a compositional bias: low complexity; sequence NQEQSNQLEQES. The segment covering 197–206 has biased composition (polar residues); the sequence is AISSELSEVN. Composition is skewed to basic and acidic residues over residues 228 to 237, 248 to 288, and 295 to 340; these read SKEKEAKSNE, KENK…DKKS, and VKRE…ELKR. Acidic residues predominate over residues 361–378; sequence EPEDVEDTAEDLLEEDPL. Composition is skewed to basic residues over residues 385–397 and 414–428; these read PKLK…KVGK and KAGK…KRRQ. Basic and acidic residues predominate over residues 484-506; sequence EPGRGKSAERERSERKDRKEQPQ. Residues 592–765 enclose the tr-type G domain; the sequence is RRPPVVTIMG…LLVAEVGELS (174 aa). Positions 601-608 are G1; the sequence is GHVDHGKT. 601–608 serves as a coordination point for GTP; sequence GHVDHGKT. Residues 626–630 are G2; sequence GITQH. Positions 651–654 are G3; the sequence is DTPG. GTP-binding positions include 651–655 and 705–708; these read DTPGH and NKID. A G4 region spans residues 705–708; the sequence is NKID. The tract at residues 741 to 743 is G5; it reads SAL.

Belongs to the TRAFAC class translation factor GTPase superfamily. Classic translation factor GTPase family. IF-2 subfamily.

The protein localises to the cytoplasm. Functionally, one of the essential components for the initiation of protein synthesis. Protects formylmethionyl-tRNA from spontaneous hydrolysis and promotes its binding to the 30S ribosomal subunits. Also involved in the hydrolysis of GTP during the formation of the 70S ribosomal complex. This chain is Translation initiation factor IF-2, found in Gloeothece citriformis (strain PCC 7424) (Cyanothece sp. (strain PCC 7424)).